Reading from the N-terminus, the 373-residue chain is Glutamate 5-kinase (373 aa).

Lys-15 contributes to the ATP binding site. Residues Ser-55, Asp-142, and Asn-154 each contribute to the substrate site. ATP is bound by residues 174–175 and 216–222; these read TD and TGGMVTK. The region spanning 281 to 359 is the PUA domain; sequence SGKIIVDDGA…GEIEAILGYK (79 aa).

This sequence belongs to the glutamate 5-kinase family.

The protein resides in the cytoplasm. It catalyses the reaction L-glutamate + ATP = L-glutamyl 5-phosphate + ADP. It functions in the pathway amino-acid biosynthesis; L-proline biosynthesis; L-glutamate 5-semialdehyde from L-glutamate: step 1/2. In terms of biological role, catalyzes the transfer of a phosphate group to glutamate to form L-glutamate 5-phosphate. The polypeptide is Glutamate 5-kinase (Geobacter sulfurreducens (strain ATCC 51573 / DSM 12127 / PCA)).